A 316-amino-acid chain; its full sequence is L-lactate dehydrogenase (316 aa).

Residue aspartate 34–valine 39 coordinates NAD(+). The substrate site is built by arginine 89, asparagine 121, and arginine 152. Position 121 (asparagine 121) interacts with NAD(+). The active-site Proton acceptor is the histidine 172.

The protein belongs to the LDH/MDH superfamily. LDH family. In terms of assembly, homotetramer.

It carries out the reaction (S)-lactate + NAD(+) = pyruvate + NADH + H(+). It functions in the pathway fermentation; pyruvate fermentation to lactate; (S)-lactate from pyruvate: step 1/1. This Botryococcus braunii (Green alga) protein is L-lactate dehydrogenase.